The chain runs to 190 residues: GMP synthase [glutamine-hydrolyzing] subunit A (190 aa).

The 188-residue stretch at 2 to 189 (TILVINNKGQ…YEICKKRCNN (188 aa)) folds into the Glutamine amidotransferase type-1 domain. Cys-76 functions as the Nucleophile in the catalytic mechanism. Residues His-163 and Glu-165 contribute to the active site.

As to quaternary structure, heterodimer composed of a glutamine amidotransferase subunit (A) and a GMP-binding subunit (B).

It catalyses the reaction XMP + L-glutamine + ATP + H2O = GMP + L-glutamate + AMP + diphosphate + 2 H(+). The protein operates within purine metabolism; GMP biosynthesis; GMP from XMP (L-Gln route): step 1/1. Catalyzes the synthesis of GMP from XMP. The chain is GMP synthase [glutamine-hydrolyzing] subunit A from Methanobrevibacter smithii (strain ATCC 35061 / DSM 861 / OCM 144 / PS).